The primary structure comprises 99 residues: HTH-type transcriptional regulator YgaV (99 aa).

In terms of domain architecture, HTH arsR-type spans 7–99 (LQASAEQAAA…IATLKNVYCP (93 aa)). The segment at residues 41–64 (AGELTRITGLSASATSQHLARMRD) is a DNA-binding region (H-T-H motif).

With respect to regulation, in the presence of H(2)S, two cysteine residues form an intramolecular tetrasulfide bond, which attenuates the binding of YgaV to DNA. Both unmodified YgaV and sulfide-modified YgaV can probably function as either a repressor or an activator. Binds heme, which may influence the DNA-binding affinity. Transcriptional regulator that regulates large-scale gene expression in response to sulfide. May act as a global regulator responsible for redox homeostasis. It functions as both a repressor and an activator. In the absence of sulfide compounds, it negatively regulates many anaerobic respiratory genes, including formate, fumarate, lactate, nitrate and nitrite reductase genes. In the presence of hydrogen sulfide (H(2)S), YgaV activity is attenuated, leading to the expression of anaerobic respiratory and ROS scavenging genes, which contributes to redox homeostasis, reactive oxygen species (ROS) scavenging and antibiotic tolerance. It responds to H(2)O(2) scavenging and increases antibiotic tolerance under H(2)S-atmospheric conditions. It also negatively regulates its own expression by binding to the ygaVP promoter region. May also be involved in regulatory mechanisms that operate independently of sulfide. In Escherichia coli (strain K12), this protein is HTH-type transcriptional regulator YgaV (ygaV).